The sequence spans 783 residues: MNTKILDQLEFNKVKDQFTEYLQTEQAQAELRDLVPMTNPERIQNQFTEIQEMSEIFIEHHGFAIGSLRDISEPLRRLELDADLNIQELIAIKKVLQASADLSRFYADLENVELIALKRLFEKIEAFPSLQGSLQSINDGGFIEHFASPELQNIRRQLKACDDAIRQTLQDILKKSGHMLAENLIASRNGRSVLPVKNTYRNRIAGVVHDISSSGNTVYIEPRAVIQLNEKITQLRADERHEMARILHELSDQLRPHTAAIANNAWILGHMDFIRGKYLYLHDKKAIIPEISDNQTLQLLNVRHPLLINPVANDLRFDEDLTVIVITGPNTGGKTVMLKTLGLAQLMAQSGLPILADKGSRVAIFQEIFADIGDEQSIEQSLSTFSSHMTHIVEILNTADSNSLVLVDELGAGTDPQEGASLAMAILEHLRLSQIKTMATTHYPELKAYGIETQHVENASMEFDTATLRPTYRFMQGVPGRSNAFEIARRLGLNEIIVKEAENLTDTDSDVNRIIEQLEAQTVETQKRLEHIKDVEQENLKFNRAVKKLYNEFSHEYDKELEKAQKEIQEMVDTALAESDSILKNLHDKSQLKPHEVIDAKGKLKKLAAQVDLSKNKVLRKAKKEKAARAPRVGDDIIVTAYGQRGTLTSQAKNGNWEAQVGLIKMSLKADEFTLVRAQAEAQQPKKKQINVVKKAKKTSSDGPRARLDLRGKRYEEAMQELDAFIDQALLNNMSQVEIIHGIGTGVIRDAVTKYLRRHRHVKNFEYAPQSAGGSGCTIATLG.

Residue 328–335 (GPNTGGKT) participates in ATP binding. A Smr domain is found at 708–783 (LDLRGKRYEE…GSGCTIATLG (76 aa)).

It belongs to the DNA mismatch repair MutS family. MutS2 subfamily. As to quaternary structure, homodimer. Binds to stalled ribosomes, contacting rRNA.

Its function is as follows. Endonuclease that is involved in the suppression of homologous recombination and thus may have a key role in the control of bacterial genetic diversity. In terms of biological role, acts as a ribosome collision sensor, splitting the ribosome into its 2 subunits. Detects stalled/collided 70S ribosomes which it binds and splits by an ATP-hydrolysis driven conformational change. Acts upstream of the ribosome quality control system (RQC), a ribosome-associated complex that mediates the extraction of incompletely synthesized nascent chains from stalled ribosomes and their subsequent degradation. Probably generates substrates for RQC. This Streptococcus thermophilus (strain ATCC BAA-491 / LMD-9) protein is Endonuclease MutS2.